The primary structure comprises 77 residues: Thioredoxin (77 aa).

Residues Cys-11 and Cys-14 each act as nucleophile in the active site. Cys-11 and Cys-14 are oxidised to a cystine.

The protein belongs to the glutaredoxin family.

Functionally, does not function as a glutathione-disulfide oxidoreductase in the presence of glutathione and glutathione reductase. Has low thioredoxin activity in vitro. The chain is Thioredoxin from Methanothermobacter thermautotrophicus (strain ATCC 29096 / DSM 1053 / JCM 10044 / NBRC 100330 / Delta H) (Methanobacterium thermoautotrophicum).